We begin with the raw amino-acid sequence, 480 residues long: UDP-glucose 6-dehydrogenase 4 (480 aa).

NAD(+) contacts are provided by residues 8–13 (GAGYVG), aspartate 33, arginine 38, 86–90 (VNTPT), 127–128 (ST), and glutamate 161. Substrate contacts are provided by residues 157-161 (EFLAE), 216-223 (KLAANAFL), and 256-269 (RIGP…VGFG). Cysteine 272 functions as the Nucleophile in the catalytic mechanism. Residue 272 to 275 (CFQK) coordinates NAD(+). 334 to 335 (FK) provides a ligand contact to substrate. Residue arginine 342 coordinates NAD(+). Serine 393 carries the phosphoserine modification. Residue arginine 447 participates in substrate binding.

It belongs to the UDP-glucose/GDP-mannose dehydrogenase family.

It catalyses the reaction UDP-alpha-D-glucose + 2 NAD(+) + H2O = UDP-alpha-D-glucuronate + 2 NADH + 3 H(+). It participates in nucleotide-sugar biosynthesis; UDP-alpha-D-glucuronate biosynthesis; UDP-alpha-D-glucuronate from UDP-alpha-D-glucose: step 1/1. Involved in the biosynthesis of UDP-glucuronic acid (UDP-GlcA), providing nucleotide sugars for cell-wall polymers. This is UDP-glucose 6-dehydrogenase 4 (UGD4) from Oryza sativa subsp. japonica (Rice).